The following is a 347-amino-acid chain: UDP-glucose 4-epimerase (347 aa).

NAD(+) is bound by residues G11 to I13, D32 to N36, D65 to I66, F87, and K91. S131–T133 contacts substrate. The active-site Proton acceptor is Y156. NAD(+)-binding residues include K160 and Y184. Substrate is bound by residues Y184 to N186, N205 to L207, N223 to F225, R238, and R299 to D302.

It belongs to the NAD(P)-dependent epimerase/dehydratase family. Homodimer. Requires NAD(+) as cofactor.

The catalysed reaction is UDP-alpha-D-glucose = UDP-alpha-D-galactose. It catalyses the reaction UDP-N-acetyl-alpha-D-glucosamine = UDP-N-acetyl-alpha-D-galactosamine. It participates in carbohydrate metabolism; galactose metabolism. In terms of biological role, catalyzes two distinct but analogous reactions: the reversible epimerization of UDP-glucose to UDP-galactose and the reversible epimerization of UDP-N-acetylglucosamine to UDP-N-acetylgalactosamine. The reaction with UDP-Gal plays a critical role in the Leloir pathway of galactose catabolism in which galactose is converted to the glycolytic intermediate glucose 6-phosphate. It contributes to the catabolism of dietary galactose and enables the endogenous biosynthesis of both UDP-Gal and UDP-GalNAc when exogenous sources are limited. Both UDP-sugar interconversions are important in the synthesis of glycoproteins and glycolipids. The protein is UDP-glucose 4-epimerase (Gale) of Mus musculus (Mouse).